The primary structure comprises 496 residues: Probable cytosol aminopeptidase (496 aa).

The Mn(2+) site is built by Lys-262 and Asp-267. The active site involves Lys-274. The Mn(2+) site is built by Asp-285, Asp-344, and Glu-346. The active site involves Arg-348.

It belongs to the peptidase M17 family. It depends on Mn(2+) as a cofactor.

The protein resides in the cytoplasm. The catalysed reaction is Release of an N-terminal amino acid, Xaa-|-Yaa-, in which Xaa is preferably Leu, but may be other amino acids including Pro although not Arg or Lys, and Yaa may be Pro. Amino acid amides and methyl esters are also readily hydrolyzed, but rates on arylamides are exceedingly low.. It carries out the reaction Release of an N-terminal amino acid, preferentially leucine, but not glutamic or aspartic acids.. Functionally, presumably involved in the processing and regular turnover of intracellular proteins. Catalyzes the removal of unsubstituted N-terminal amino acids from various peptides. The chain is Probable cytosol aminopeptidase from Rhizobium etli (strain CIAT 652).